Consider the following 62-residue polypeptide: Cecropin-D (62 aa).

Positions 1–22 are cleaved as a signal peptide; the sequence is MNFTKILFFVVACVFAMRTVSA. Positions 23–24 are cleaved as a propeptide — removed by a dipeptidylpeptidase; that stretch reads AP. Position 60 is a lysine amide (Lys-60).

This sequence belongs to the cecropin family.

The protein resides in the secreted. Its function is as follows. Cecropins have lytic and antibacterial activity against several Gram-positive and Gram-negative bacteria. In Hyalophora cecropia (Cecropia moth), this protein is Cecropin-D.